A 129-amino-acid polypeptide reads, in one-letter code: Urease subunit beta (129 aa).

Belongs to the urease beta subunit family. Heterotrimer of UreA (gamma), UreB (beta) and UreC (alpha) subunits. Three heterotrimers associate to form the active enzyme.

It localises to the cytoplasm. It catalyses the reaction urea + 2 H2O + H(+) = hydrogencarbonate + 2 NH4(+). It functions in the pathway nitrogen metabolism; urea degradation; CO(2) and NH(3) from urea (urease route): step 1/1. This Photorhabdus laumondii subsp. laumondii (strain DSM 15139 / CIP 105565 / TT01) (Photorhabdus luminescens subsp. laumondii) protein is Urease subunit beta.